The primary structure comprises 141 residues: Translation initiation factor IF-1, chloroplastic (141 aa).

The N-terminal 46 residues, 1–46, are a transit peptide targeting the chloroplast; that stretch reads MLQLCSTFRPQLLLPCQFRFTNGVLIPQINYVASNSVVNIRPMIRC. The segment at 49–69 is disordered; the sequence is ASGGRGGANRSKPAKPQVKEG. An S1-like domain is found at 63-138; it reads KPQVKEGSNK…TKGRIIFRMS (76 aa).

Belongs to the IF-1 family. In terms of assembly, component of the 30S ribosomal translation pre-initiation complex which assembles on the 30S ribosome in the order IF-2 and IF-3, IF-1 and N-formylmethionyl-tRNA(fMet); mRNA recruitment can occur at any time during PIC assembly.

Its subcellular location is the plastid. It is found in the chloroplast. Its function is as follows. One of the essential components for the initiation of protein synthesis. Stabilizes the binding of IF-2 and IF-3 on the 30S subunit to which N-formylmethionyl-tRNA(fMet) subsequently binds. Helps modulate mRNA selection, yielding the 30S pre-initiation complex (PIC). Upon addition of the 50S ribosomal subunit IF-1, IF-2 and IF-3 are released leaving the mature 70S translation initiation complex. The protein is Translation initiation factor IF-1, chloroplastic of Arabidopsis thaliana (Mouse-ear cress).